The chain runs to 157 residues: MPDSAEETISDMASVILSGTVLAFDFGVRRIGVAIGEYELRLAHPLMTIDQAMTKPRFEKIAELIETWQPVLLVVGLSVHADGAEHEITRLCQRFARRLEGRFGIPVVMEDERYTTAIARLTLEEVGITGRKQRPMLDQIAAQHILQTFFDSSHAAS.

It belongs to the YqgF nuclease family.

The protein resides in the cytoplasm. Functionally, could be a nuclease involved in processing of the 5'-end of pre-16S rRNA. This is Putative pre-16S rRNA nuclease from Nitrosomonas eutropha (strain DSM 101675 / C91 / Nm57).